Consider the following 1047-residue polypeptide: MDSAIEISSGSDSDDEVPPQPVWPQTRTRMDPTWLSRRPLPTVDSHARAEHTNQAPPNGASSDTSRPGVSKPFTGNGNTVNSRISSGSGADYVRLSSEQALKRTLPPSFNSPPLPARSGTNNISNASGSRVGVDYERPLSQQALKRTLPPSFNPPPLPSRSGTNNIRNAGGSRFGADYSHPAVSAVGNKSTFGDHYSGAHAEIGIQRGVNGVRILPPSLTHGTSASVLHHAGSSDPMHRFGGGEDRNPDNDERLVYQAALQVLNQPMTESDLPPGTLSVPLMRHQKIALAWMFQKETSSFNCPGGILADDQGLGKTVSTIALILKQKIVSQLKSESSCKQETEALVLDADDESDNAKHESGSHVKPELKVSSNSETSVLSACGNDENDSSDMEKAEDEEANSSTRAFQWKRPAAGTLIVCPASVVRQWARELDEKVSEESKLSVLVYHGSNRTKDPNELAEYDVVVTTYAIVTNEAPNKFLVDEDENDEKNTDRYGLASGFSNNKKRKVVVGASKKSKRRGRKSTNDTSSEPDCGPLGKVGWFRIVLDEAQTIKNYRTQMARSCCTLRAKRRWCLSGTPIQNTIDDLYSYFRFLRYDPYAVYKSFYSTIKVPISRNSCQGYKKLQAVLRAIMLRRTKGTLLDGKPIINLPPKVVNLSQVDFSVAERSFYKKLEADSRSQFKAYADAGTLSQNYANILLLLLRLRQACDHPQLVKRYNSDPVGKVSEAAVRRLPREARSRLINRLESSSAICYECNEPPEKPVVTLCGHIFCYECVLEYITGDENTCPVPRCKQQLARDVVFSESSLRNCTSDDSGCSSSHDNGLDRSVFQKRDFCSSKIKAVLDILQSLSQPDSPNSAQHGQMPSSSRPYDDDDVTIVEPMRLHSSSPSQGAVKTIIFSQWTGMLDLVELRILESGIEFRRLDGTMSLAARDRAVKEFSKKPDVKVMLMSLKAGNLGLNMVAACHVILLDLWWNPTTEDQAIDRAHRIGQTRPVTVTRITIKDTVEDRILKLQEEKRTMVASAFGEEHGGSSATRLTVDDLKYLFMV.

Over residues 1-11 (MDSAIEISSGS) the composition is skewed to low complexity. Disordered stretches follow at residues 1-89 (MDSA…SGSG), 103-130 (RTLP…SGSR), and 145-174 (KRTL…GSRF). Composition is skewed to polar residues over residues 52–88 (TNQA…SSGS) and 118–128 (SGTNNISNASG). Positions 296–597 (ETSSFNCPGG…YSYFRFLRYD (302 aa)) constitute a Helicase ATP-binding domain. An ATP-binding site is contributed by 309–316 (DDQGLGKT). 2 disordered regions span residues 349–407 (ADDE…TRAF) and 511–533 (VGAS…SEPD). The span at 354-368 (DNAKHESGSHVKPEL) shows a compositional bias: basic and acidic residues. The segment covering 370–379 (VSSNSETSVL) has biased composition (polar residues). Positions 385–400 (DENDSSDMEKAEDEEA) are enriched in acidic residues. Positions 511-523 (VGASKKSKRRGRK) are enriched in basic residues. The RING-type; degenerate zinc-finger motif lies at 751–790 (CYECNEPPEKPVVTLCGHIFCYECVLEYITGDENTCPVPR). Over residues 851–868 (QPDSPNSAQHGQMPSSSR) the composition is skewed to polar residues. The tract at residues 851–873 (QPDSPNSAQHGQMPSSSRPYDDD) is disordered. Positions 887–1042 (SPSQGAVKTI…ATRLTVDDLK (156 aa)) constitute a Helicase C-terminal domain.

The protein belongs to the SNF2/RAD54 helicase family. RAD16 subfamily. In terms of assembly, interacts with SUVR2. Interacts with itself.

The protein localises to the nucleus. Its function is as follows. Probable helicase-like transcription factor involved in transcriptional gene silencing. Associates with SUVR2 and contributes to transcriptional gene silencing at RNA-directed DNA methylation (RdDM) target loci but also at RdDM-independent target loci. May be involved in nucleosome positioning to form ordered nucleosome arrays on chromatin. Associates with SUVR2 and functions redundantly with FRG2. Required for the efficient methylation of a broad range of RdDM target loci. This chain is Helicase-like transcription factor CHR27, found in Arabidopsis thaliana (Mouse-ear cress).